We begin with the raw amino-acid sequence, 447 residues long: Chromosomal replication initiator protein DnaA (447 aa).

The tract at residues 1–74 (MENIEELWSA…MLLEVTGSEL (74 aa)) is domain I, interacts with DnaA modulators. A domain II region spans residues 74 to 108 (LNTKFIIPDSLEEIEEQKPMPKPKQSTDTGDSPKS). Residues 85 to 107 (EEIEEQKPMPKPKQSTDTGDSPK) are disordered. Polar residues predominate over residues 97–107 (KQSTDTGDSPK). Positions 109–325 (MLNSKYTFDT…GALIRVVAYS (217 aa)) are domain III, AAA+ region. 4 residues coordinate ATP: glycine 153, glycine 155, lysine 156, and threonine 157. The tract at residues 326–447 (SLVNQDIDAS…EELKEKLKSI (122 aa)) is domain IV, binds dsDNA.

This sequence belongs to the DnaA family. Oligomerizes as a right-handed, spiral filament on DNA at oriC.

It is found in the cytoplasm. Plays an essential role in the initiation and regulation of chromosomal replication. ATP-DnaA binds to the origin of replication (oriC) to initiate formation of the DNA replication initiation complex once per cell cycle. Binds the DnaA box (a 9 base pair repeat at the origin) and separates the double-stranded (ds)DNA. Forms a right-handed helical filament on oriC DNA; dsDNA binds to the exterior of the filament while single-stranded (ss)DNA is stabiized in the filament's interior. The ATP-DnaA-oriC complex binds and stabilizes one strand of the AT-rich DNA unwinding element (DUE), permitting loading of DNA polymerase. After initiation quickly degrades to an ADP-DnaA complex that is not apt for DNA replication. Binds acidic phospholipids. This Oceanobacillus iheyensis (strain DSM 14371 / CIP 107618 / JCM 11309 / KCTC 3954 / HTE831) protein is Chromosomal replication initiator protein DnaA.